A 195-amino-acid polypeptide reads, in one-letter code: Group XIIB secretory phospholipase A2-like protein (195 aa).

The N-terminal stretch at 1–19 is a signal peptide; the sequence is MKLLCGFFLLWLGLVGNLA. 4 residues coordinate Ca(2+): serine 89, tyrosine 91, leucine 93, and aspartate 116.

This sequence belongs to the phospholipase A2 family. Requires Ca(2+) as cofactor.

It is found in the secreted. In terms of biological role, not known; does not seem to have catalytic activity. This is Group XIIB secretory phospholipase A2-like protein (Pla2g12b) from Mus musculus (Mouse).